Here is a 511-residue protein sequence, read N- to C-terminus: Protein HESO1 (511 aa).

The tract at residues 378 to 511 is disordered; it reads ARPQNQQMQQ…GQIWRPRHEQ (134 aa). Positions 381-392 are enriched in low complexity; it reads QNQQMQQNWSQS. Polar residues predominate over residues 404 to 465; it reads LTQSRPQQNW…TSAGSSQNQG (62 aa).

This sequence belongs to the DNA polymerase type-B-like family.

The protein localises to the cytoplasm. Its subcellular location is the P-body. It is found in the nucleus. It carries out the reaction RNA(n) + UTP = RNA(n)-3'-uridine ribonucleotide + diphosphate. Its activity is regulated as follows. Completely inhibited by 2'-O-methylation on the substrate RNA. Uridylates small RNAs to trigger their degradation. Catalyzes the uridylation of 5' fragments produced by AGO1-mediated cleavage of miRNA target RNAs. Acts synergistically with URT1 in unmethylated miRNA uridylation, leading to their degradation. URT1 and HESO1 prefer substrates with different 3' end nucleotides and act cooperatively to tail different forms of the same miRNAs. URT1 and HESO1 act sequentially, with URT1 mono-uridylating the miRNAs followed by their further uridylation by HESO1. URT1 and HESO1 are involved in the uridylation and clearance of RISC-generated 5' mRNA fragments. Able to act on AGO1-bound miRNAs and the uridylated species stay associated with AGO1. The chain is Protein HESO1 from Arabidopsis thaliana (Mouse-ear cress).